Here is a 366-residue protein sequence, read N- to C-terminus: Beta sliding clamp (366 aa).

This sequence belongs to the beta sliding clamp family. In terms of assembly, forms a ring-shaped head-to-tail homodimer around DNA which binds and tethers DNA polymerases and other proteins to the DNA. The DNA replisome complex has a single clamp-loading complex (3 tau and 1 each of delta, delta', psi and chi subunits) which binds 3 Pol III cores (1 core on the leading strand and 2 on the lagging strand) each with a beta sliding clamp dimer. Additional proteins in the replisome are other copies of gamma, psi and chi, Ssb, DNA helicase and RNA primase.

It localises to the cytoplasm. Its function is as follows. Confers DNA tethering and processivity to DNA polymerases and other proteins. Acts as a clamp, forming a ring around DNA (a reaction catalyzed by the clamp-loading complex) which diffuses in an ATP-independent manner freely and bidirectionally along dsDNA. Initially characterized for its ability to contact the catalytic subunit of DNA polymerase III (Pol III), a complex, multichain enzyme responsible for most of the replicative synthesis in bacteria; Pol III exhibits 3'-5' exonuclease proofreading activity. The beta chain is required for initiation of replication as well as for processivity of DNA replication. The chain is Beta sliding clamp (dnaN) from Vibrio cholerae serotype O1 (strain ATCC 39315 / El Tor Inaba N16961).